The sequence spans 764 residues: Thyrotropin receptor (764 aa).

Residues 1–21 (MRPGSLLLLVLLLALSRSLRG) form the signal peptide. Residues 22–413 (KECASPPCEC…EFNPCEDIMG (392 aa)) are Extracellular-facing. The cysteines at positions 31 and 41 are disulfide-linked. N77 and N99 each carry an N-linked (GlcNAc...) asparagine glycan. 7 LRR repeats span residues 100-124 (LSKMTHIEIRNTRSLTYIDPDALTE), 125-150 (LPLLKFLGIFNTGLRIFPDLTKIYST), 151-174 (DIFFILEITDNPYMTSVPENAFQG), 176-199 (CNETLTLKLYNNGFTSVQGHAFNG), 200-223 (TKLDAVYLNKNKYLTAIDNDAFGG), 225-248 (YSGPTLLDVSSTSVTALPSKGLEH), and 264-288 (PLSLSFLHLTRADLSYPSHCCAFKN). N-linked (GlcNAc...) asparagine glycosylation is found at N177 and N198. The N-linked (GlcNAc...) asparagine glycan is linked to N302. Position 385 is a sulfotyrosine (Y385). A helical membrane pass occupies residues 414–441 (YRFLRIVVWFVSLLALLGNIFVLLILLT). The Cytoplasmic portion of the chain corresponds to 442–450 (SHYKLTVPR). Residues 451-473 (FLMCNLAFADFCMGVYLLLIASV) traverse the membrane as a helical segment. The Extracellular portion of the chain corresponds to 474–494 (DLYTHSEYYNHAIDWQTGPGC). A disulfide bond links C494 and C569. The helical transmembrane segment at 495-517 (NTAGFFTVFASELSVYTLTVITL) threads the bilayer. Residues 518–537 (ERWYAITFAMRLDRKIRLRH) are Cytoplasmic-facing. The chain crosses the membrane as a helical span at residues 538 to 560 (AYTIMAGGWVSCFLLALLPMVGI). Over 561-580 (SSYAKVSICLPMDTDTPLAL) the chain is Extracellular. A helical transmembrane segment spans residues 581–602 (AYIVLVLLLNVVAFVVVCSCYV). Residues 603–625 (KIYITVRNPQYNPRDKDTKIAKR) are Cytoplasmic-facing. The helical transmembrane segment at 626–649 (MAVLIFTDFMCMAPISFYALSALM) threads the bilayer. Topologically, residues 650–660 (NKPLITVTNSK) are extracellular. A helical transmembrane segment spans residues 661 to 682 (ILLVLFYPLNSCANPFLYAIFT). Over 683–764 (KAFQRDVFIL…ISEEYKQTAL (82 aa)) the chain is Cytoplasmic. A PDZ-binding motif is present at residues 762 to 764 (TAL).

This sequence belongs to the G-protein coupled receptor 1 family. FSH/LSH/TSH subfamily. In terms of assembly, interacts with heterodimer GPHA2:GPHB5; this interaction stimulates cAMP production. Interacts (via the PDZ-binding motif) with SCRIB; regulates TSHR trafficking and function. In terms of processing, glycosylated. Sulfated. Sulfation on Tyr-385 plays a role in thyrotropin receptor binding and activation.

It localises to the cell membrane. The protein localises to the basolateral cell membrane. Its function is as follows. Receptor for the thyroid-stimulating hormone (TSH) or thyrotropin. Also acts as a receptor for the heterodimeric glycoprotein hormone (GPHA2:GPHB5) or thyrostimulin. The activity of this receptor is mediated by G proteins which activate adenylate cyclase. Plays a central role in controlling thyroid cell metabolism. The chain is Thyrotropin receptor (Tshr) from Mus musculus (Mouse).